A 291-amino-acid chain; its full sequence is Lipoyl synthase (291 aa).

Residues C35, C40, C46, C61, C65, C68, and S273 each coordinate [4Fe-4S] cluster. Residues 47–262 enclose the Radical SAM core domain; that stretch reads FGKRQATFLI…KEKALAMGFE (216 aa).

This sequence belongs to the radical SAM superfamily. Lipoyl synthase family. [4Fe-4S] cluster is required as a cofactor.

It is found in the cytoplasm. The enzyme catalyses [[Fe-S] cluster scaffold protein carrying a second [4Fe-4S](2+) cluster] + N(6)-octanoyl-L-lysyl-[protein] + 2 oxidized [2Fe-2S]-[ferredoxin] + 2 S-adenosyl-L-methionine + 4 H(+) = [[Fe-S] cluster scaffold protein] + N(6)-[(R)-dihydrolipoyl]-L-lysyl-[protein] + 4 Fe(3+) + 2 hydrogen sulfide + 2 5'-deoxyadenosine + 2 L-methionine + 2 reduced [2Fe-2S]-[ferredoxin]. The protein operates within protein modification; protein lipoylation via endogenous pathway; protein N(6)-(lipoyl)lysine from octanoyl-[acyl-carrier-protein]: step 2/2. Catalyzes the radical-mediated insertion of two sulfur atoms into the C-6 and C-8 positions of the octanoyl moiety bound to the lipoyl domains of lipoate-dependent enzymes, thereby converting the octanoylated domains into lipoylated derivatives. The chain is Lipoyl synthase from Geobacter sp. (strain M21).